A 417-amino-acid polypeptide reads, in one-letter code: Glutamate-1-semialdehyde 2,1-aminomutase (417 aa).

Lys267 bears the N6-(pyridoxal phosphate)lysine mark.

It belongs to the class-III pyridoxal-phosphate-dependent aminotransferase family. HemL subfamily. Homodimer. It depends on pyridoxal 5'-phosphate as a cofactor.

Its subcellular location is the cytoplasm. It catalyses the reaction (S)-4-amino-5-oxopentanoate = 5-aminolevulinate. Its pathway is porphyrin-containing compound metabolism; protoporphyrin-IX biosynthesis; 5-aminolevulinate from L-glutamyl-tRNA(Glu): step 2/2. This is Glutamate-1-semialdehyde 2,1-aminomutase from Solibacter usitatus (strain Ellin6076).